The chain runs to 323 residues: Aspartate carbamoyltransferase catalytic subunit (323 aa).

Residues Arg-68 and Thr-69 each coordinate carbamoyl phosphate. Lys-96 contributes to the L-aspartate binding site. Carbamoyl phosphate contacts are provided by Arg-118, His-148, and Gln-151. Residues Arg-181 and Arg-236 each contribute to the L-aspartate site. Positions 277 and 278 each coordinate carbamoyl phosphate.

Belongs to the aspartate/ornithine carbamoyltransferase superfamily. ATCase family. As to quaternary structure, heterododecamer (2C3:3R2) of six catalytic PyrB chains organized as two trimers (C3), and six regulatory PyrI chains organized as three dimers (R2).

It carries out the reaction carbamoyl phosphate + L-aspartate = N-carbamoyl-L-aspartate + phosphate + H(+). It functions in the pathway pyrimidine metabolism; UMP biosynthesis via de novo pathway; (S)-dihydroorotate from bicarbonate: step 2/3. In terms of biological role, catalyzes the condensation of carbamoyl phosphate and aspartate to form carbamoyl aspartate and inorganic phosphate, the committed step in the de novo pyrimidine nucleotide biosynthesis pathway. In Verminephrobacter eiseniae (strain EF01-2), this protein is Aspartate carbamoyltransferase catalytic subunit.